Reading from the N-terminus, the 345-residue chain is Phosphoribosylformylglycinamidine cyclo-ligase (345 aa).

It belongs to the AIR synthase family.

The protein resides in the cytoplasm. The enzyme catalyses 2-formamido-N(1)-(5-O-phospho-beta-D-ribosyl)acetamidine + ATP = 5-amino-1-(5-phospho-beta-D-ribosyl)imidazole + ADP + phosphate + H(+). It functions in the pathway purine metabolism; IMP biosynthesis via de novo pathway; 5-amino-1-(5-phospho-D-ribosyl)imidazole from N(2)-formyl-N(1)-(5-phospho-D-ribosyl)glycinamide: step 2/2. This chain is Phosphoribosylformylglycinamidine cyclo-ligase, found in Limosilactobacillus reuteri (strain DSM 20016) (Lactobacillus reuteri).